A 426-amino-acid polypeptide reads, in one-letter code: Serine hydroxymethyltransferase (426 aa).

(6S)-5,6,7,8-tetrahydrofolate contacts are provided by residues L122 and 126-128; that span reads GHL. K231 carries the N6-(pyridoxal phosphate)lysine modification.

This sequence belongs to the SHMT family. Homodimer. It depends on pyridoxal 5'-phosphate as a cofactor.

The protein resides in the cytoplasm. It catalyses the reaction (6R)-5,10-methylene-5,6,7,8-tetrahydrofolate + glycine + H2O = (6S)-5,6,7,8-tetrahydrofolate + L-serine. Its pathway is one-carbon metabolism; tetrahydrofolate interconversion. The protein operates within amino-acid biosynthesis; glycine biosynthesis; glycine from L-serine: step 1/1. Functionally, catalyzes the reversible interconversion of serine and glycine with tetrahydrofolate (THF) serving as the one-carbon carrier. This reaction serves as the major source of one-carbon groups required for the biosynthesis of purines, thymidylate, methionine, and other important biomolecules. Also exhibits THF-independent aldolase activity toward beta-hydroxyamino acids, producing glycine and aldehydes, via a retro-aldol mechanism. This Koribacter versatilis (strain Ellin345) protein is Serine hydroxymethyltransferase.